We begin with the raw amino-acid sequence, 595 residues long: Probable hydrolase M10 (595 aa).

The signal sequence occupies residues 1–23; the sequence is MRFTSTILLRVAVLLSLGGGSQT. N-linked (GlcNAc...) asparagine glycans are attached at residues asparagine 59, asparagine 87, asparagine 266, asparagine 436, asparagine 457, and asparagine 561.

This sequence belongs to the beta-lactamase family.

It participates in secondary metabolite biosynthesis. Its function is as follows. Probable hydrolase; part of the gene cluster that mediates the biosynthesis of squalestatin S1 (SQS1, also known as zaragozic acid A), a heavily oxidized fungal polyketide that offers potent cholesterol lowering activity by targeting squalene synthase (SS). SQS1 is composed of a 2,8-dioxobicyclic[3.2.1]octane-3,4,5-tricarboxyclic acid core that is connected to two lipophilic polyketide arms. These initial steps feature the priming of an unusual benzoic acid starter unit onto the highly reducing polyketide synthase pks2, followed by oxaloacetate extension and product release to generate a tricarboxylic acid containing product. The phenylalanine ammonia lyase (PAL) M7 and the acyl-CoA ligase M9 are involved in transforming phenylalanine into benzoyl-CoA. The citrate synthase-like protein R3 is involved in connecting the C-alpha-carbons of the hexaketide chain and oxaloacetate to afford the tricarboxylic acid unit. The potential hydrolytic enzymes, M8 and M10, are in close proximity to pks2 and may participate in product release. On the other side, the tetraketide arm is synthesized by a the squalestatin tetraketide synthase pks1 and enzymatically esterified to the core in the last biosynthetic step, by the acetyltransferase M4. The biosynthesis of the tetraketide must involve 3 rounds of chain extension. After the first and second rounds methyl-transfer occurs, and in all rounds of extension the ketoreductase and dehydratase are active. The enoyl reductase and C-MeT of pks1 are not active in the final round of extension. The acetyltransferase M4 appears to have a broad substrate selectivity for its acyl CoA substrate, allowing the in vitro synthesis of novel squalestatins. The biosynthesis of SQS1 requires several oxidative steps likely performed by oxidoreductases M1, R1 and R2. Finally, in support of the identification of the cluster as being responsible for SQS1 production, the cluster contains a gene encoding a putative squalene synthase (SS) R6, suggesting a likely mechanism for self-resistance. The polypeptide is Probable hydrolase M10 (Phoma sp. (strain ATCC 20986 / MF5453)).